The following is a 132-amino-acid chain: Ig kappa chain V-III region MOPC 321 (132 aa).

Residues 1-20 (METDTLLLWVLLLWVPGSTG) form the signal peptide. Residues 21–43 (DIVLTQSPASLAVSLGQRATISC) are framework-1. A disulfide bridge links Cys-43 with Cys-112. Residues 44–58 (RASKSVNTYGNSFMZ) form a complementarity-determining-1 region. A framework-2 region spans residues 59–73 (WYZZKPGZPPKLLIY). The tract at residues 74-80 (RASNLZS) is complementarity-determining-2. A framework-3 region spans residues 81-112 (GIPARFSGSGSRTBFTLTIBPVZABDVATYFC). The interval 113–121 (ZZSBZBPWT) is complementarity-determining-3. Positions 122 to 131 (FGSGTKLEIK) are framework-4.

The chain is Ig kappa chain V-III region MOPC 321 from Mus musculus (Mouse).